The sequence spans 251 residues: 1-(5-phosphoribosyl)-5-[(5-phosphoribosylamino)methylideneamino] imidazole-4-carboxamide isomerase (251 aa).

The Proton acceptor role is filled by Asp8. Catalysis depends on Asp131, which acts as the Proton donor.

Belongs to the HisA/HisF family.

It localises to the cytoplasm. It catalyses the reaction 1-(5-phospho-beta-D-ribosyl)-5-[(5-phospho-beta-D-ribosylamino)methylideneamino]imidazole-4-carboxamide = 5-[(5-phospho-1-deoxy-D-ribulos-1-ylimino)methylamino]-1-(5-phospho-beta-D-ribosyl)imidazole-4-carboxamide. Its pathway is amino-acid biosynthesis; L-histidine biosynthesis; L-histidine from 5-phospho-alpha-D-ribose 1-diphosphate: step 4/9. In Burkholderia cenocepacia (strain ATCC BAA-245 / DSM 16553 / LMG 16656 / NCTC 13227 / J2315 / CF5610) (Burkholderia cepacia (strain J2315)), this protein is 1-(5-phosphoribosyl)-5-[(5-phosphoribosylamino)methylideneamino] imidazole-4-carboxamide isomerase.